The primary structure comprises 167 residues: Piercer of microtubule wall 1 protein (167 aa).

The segment at 1–54 (MSEEKPQQSAEEPEPGEPKAKPAPEEPEPGEPKAKPAPEEPEPGEPKAKPAPEK) is disordered. The span at 16–54 (GEPKAKPAPEEPEPGEPKAKPAPEEPEPGEPKAKPAPEK) shows a compositional bias: basic and acidic residues.

The protein belongs to the PIERCE1 family. In terms of assembly, microtubule inner protein component of sperm flagellar doublet microtubules. Interacts with CFAP53, ODAD1 and ODAD3; the interactions link the outer dynein arms docking complex (ODA-DC) to the internal microtubule inner proteins (MIP) in cilium axoneme. Expressed in brain, lung, kidney and testis.

The protein resides in the cytoplasm. Its subcellular location is the cytoskeleton. It is found in the cilium axoneme. The protein localises to the flagellum axoneme. Its function is as follows. Microtubule inner protein involved in the attachment of outer dynein arms (ODAs) to dynein-decorated doublet microtubules (DMTs) in cilia axoneme. Functions at the initial step of left-right asymmetry specification of the visceral organs. This is Piercer of microtubule wall 1 protein from Mus musculus (Mouse).